We begin with the raw amino-acid sequence, 394 residues long: Elongation factor Tu (394 aa).

Residues 10-204 enclose the tr-type G domain; sequence KPHVNIGTIG…AVDSYIPQPI (195 aa). Residues 19–26 are G1; that stretch reads GHVDHGKT. 19–26 lines the GTP pocket; the sequence is GHVDHGKT. Threonine 26 provides a ligand contact to Mg(2+). A G2 region spans residues 60-64; that stretch reads GITIS. The tract at residues 81–84 is G3; sequence DCPG. Residues 81–85 and 136–139 contribute to the GTP site; these read DCPGH and NKVD. Residues 136–139 form a G4 region; the sequence is NKVD. The tract at residues 174 to 176 is G5; that stretch reads SAL.

Belongs to the TRAFAC class translation factor GTPase superfamily. Classic translation factor GTPase family. EF-Tu/EF-1A subfamily. In terms of assembly, monomer.

It localises to the cytoplasm. The enzyme catalyses GTP + H2O = GDP + phosphate + H(+). Functionally, GTP hydrolase that promotes the GTP-dependent binding of aminoacyl-tRNA to the A-site of ribosomes during protein biosynthesis. This is Elongation factor Tu from Rickettsia prowazekii (strain Madrid E).